The following is a 455-amino-acid chain: MSEIKLKYFGTDGVRGIANETLTPELAFRLGRTGGAILTRHAESDKKPVVIVGRDTRISGDMLQQAMIAGFLSVGIDVLRLGVITTPAVAFLVQNLEADAGVQITASHNPAADNGIKFFGKDGFKLSDELEYEIEQLLDSPEDTLPRPSANGLGVASNYPEGALKYMSFLQKTIPTDLSGMQVALDGANGATSDLLPRLFADLNADFVTMGTEPNGLNINDGVGSTHPEALADLVKSSEVQAGLAFDGDGDRLIAVDENGDIVDGDKIMYITGKFMNEQGRLKHSTVVSTVMSNIGFYKALAAHDMTSVKTAVGDRYVMAEMIKSGYNLGGEQSGHIIFRDWATTGDGLLTALQLLYVMKETGQKLSELAADVQVYPQKLVNIAVADKVAIQKNPAVLAKIAEVEAEMAGDGRVLVRPSGTESLLRVMAEAPTTELVEKYVEAIAAVVRDQANVS.

The active-site Phosphoserine intermediate is Ser-107. Residues Ser-107, Asp-247, Asp-249, and Asp-251 each contribute to the Mg(2+) site. A Phosphoserine modification is found at Ser-107.

The protein belongs to the phosphohexose mutase family. Requires Mg(2+) as cofactor. Post-translationally, activated by phosphorylation.

The enzyme catalyses alpha-D-glucosamine 1-phosphate = D-glucosamine 6-phosphate. Catalyzes the conversion of glucosamine-6-phosphate to glucosamine-1-phosphate. The chain is Phosphoglucosamine mutase from Leuconostoc citreum (strain KM20).